Reading from the N-terminus, the 126-residue chain is Large ribosomal subunit protein bL12 (126 aa).

The protein belongs to the bacterial ribosomal protein bL12 family. As to quaternary structure, homodimer. Part of the ribosomal stalk of the 50S ribosomal subunit. Forms a multimeric L10(L12)X complex, where L10 forms an elongated spine to which 2 to 4 L12 dimers bind in a sequential fashion. Binds GTP-bound translation factors.

Functionally, forms part of the ribosomal stalk which helps the ribosome interact with GTP-bound translation factors. Is thus essential for accurate translation. This chain is Large ribosomal subunit protein bL12, found in Francisella tularensis subsp. mediasiatica (strain FSC147).